Reading from the N-terminus, the 467-residue chain is Cysteine--tRNA ligase (467 aa).

Position 27 (C27) interacts with Zn(2+). The 'HIGH' region signature appears at 29 to 39 (PTVYNYIHIGN). The Zn(2+) site is built by C207, H232, and E236. A 'KMSKS' region motif is present at residues 264 to 268 (KMSKS). Residue K267 participates in ATP binding.

This sequence belongs to the class-I aminoacyl-tRNA synthetase family. In terms of assembly, monomer. Requires Zn(2+) as cofactor.

Its subcellular location is the cytoplasm. It catalyses the reaction tRNA(Cys) + L-cysteine + ATP = L-cysteinyl-tRNA(Cys) + AMP + diphosphate. The chain is Cysteine--tRNA ligase from Caldanaerobacter subterraneus subsp. tengcongensis (strain DSM 15242 / JCM 11007 / NBRC 100824 / MB4) (Thermoanaerobacter tengcongensis).